The following is a 281-amino-acid chain: Putative phosphoenolpyruvate synthase regulatory protein (281 aa).

An ADP-binding site is contributed by Gly161–Thr168.

Belongs to the pyruvate, phosphate/water dikinase regulatory protein family. PSRP subfamily.

It catalyses the reaction [pyruvate, water dikinase] + ADP = [pyruvate, water dikinase]-phosphate + AMP + H(+). The catalysed reaction is [pyruvate, water dikinase]-phosphate + phosphate + H(+) = [pyruvate, water dikinase] + diphosphate. Functionally, bifunctional serine/threonine kinase and phosphorylase involved in the regulation of the phosphoenolpyruvate synthase (PEPS) by catalyzing its phosphorylation/dephosphorylation. The protein is Putative phosphoenolpyruvate synthase regulatory protein of Herminiimonas arsenicoxydans.